Reading from the N-terminus, the 208-residue chain is MYSNHNLNSDDCCFDWNEEKAAELQRTGVSFDRSLTPQSLRTSTRRLSEENKQQSGTMHIDTSPSVVSDIISSRRDRSQDFFGPHSSSPIAPSERQRADQRSRLESMRLTRRRDKMTKVRGGLEKMEEMIMQGEHLREMQRLKQEAQKNALPSDMAEYMEWQNNEDLEDDELLAFIEKQETYKNELEHFLNNANKNVYENNSYPNSHT.

The interval 28-105 (GVSFDRSLTP…QRADQRSRLE (78 aa)) is disordered. The segment covering 33-42 (RSLTPQSLRT) has biased composition (polar residues). Residues 60 to 71 (IDTSPSVVSDII) show a composition bias toward low complexity. The segment covering 94-105 (ERQRADQRSRLE) has biased composition (basic and acidic residues).

The protein localises to the cytoplasm. It localises to the nucleus. Functionally, involved in regulation of Ty1 transposition. Inhibits Ty1 transposition at a post-transcriptional and pre-integrational stage of the Ty1 retrotransposition cycle. The polypeptide is Regulator of Ty1 transposition protein 105 (RTT105) (Saccharomyces cerevisiae (strain YJM789) (Baker's yeast)).